A 355-amino-acid polypeptide reads, in one-letter code: Isopentenyl-diphosphate delta-isomerase (355 aa).

6-7 contributes to the substrate binding site; sequence RK. Residues 62 to 64, serine 93, and asparagine 122 each bind FMN; that span reads AMT. Glutamine 152 contacts substrate. Position 153 (glutamate 153) interacts with Mg(2+). FMN is bound by residues lysine 184, threonine 214, 258–259, and 280–281; these read GG and AG.

It belongs to the IPP isomerase type 2 family. As to quaternary structure, homooctamer. Dimer of tetramers. FMN serves as cofactor. Requires NADPH as cofactor. Mg(2+) is required as a cofactor.

Its subcellular location is the cytoplasm. The enzyme catalyses isopentenyl diphosphate = dimethylallyl diphosphate. Involved in the biosynthesis of isoprenoids. Catalyzes the 1,3-allylic rearrangement of the homoallylic substrate isopentenyl (IPP) to its allylic isomer, dimethylallyl diphosphate (DMAPP). The polypeptide is Isopentenyl-diphosphate delta-isomerase (Bacillus pumilus (strain SAFR-032)).